Reading from the N-terminus, the 156-residue chain is Eosinophil cationic protein 2 (156 aa).

Residues 1–25 (MGPKLLESRLCLLLLLGLVLMLASC) form the signal peptide. The active-site Proton acceptor is the His-38. 4 disulfides stabilise this stretch: Cys-47-Cys-106, Cys-61-Cys-119, Cys-79-Cys-134, and Cys-86-Cys-94. 62-66 (KGLNT) contributes to the substrate binding site. 3 N-linked (GlcNAc...) asparagine glycosylation sites follow: Asn-89, Asn-96, and Asn-107. Residue His-151 is the Proton donor of the active site.

The protein belongs to the pancreatic ribonuclease family.

It localises to the cytoplasmic granule. Its function is as follows. Cytotoxin and helminthotoxin with ribonuclease activity. Selectively chemotactic for dendritic cells. Possesses a wide variety of biological activities. This Mus musculus (Mouse) protein is Eosinophil cationic protein 2 (Ear2).